A 122-amino-acid polypeptide reads, in one-letter code: Ribonuclease P protein component 1 (122 aa).

This sequence belongs to the eukaryotic/archaeal RNase P protein component 1 family. As to quaternary structure, consists of a catalytic RNA component and at least 4-5 protein subunits.

The protein localises to the cytoplasm. It carries out the reaction Endonucleolytic cleavage of RNA, removing 5'-extranucleotides from tRNA precursor.. Functionally, part of ribonuclease P, a protein complex that generates mature tRNA molecules by cleaving their 5'-ends. In Thermococcus sibiricus (strain DSM 12597 / MM 739), this protein is Ribonuclease P protein component 1.